A 1047-amino-acid polypeptide reads, in one-letter code: Atrial natriuretic peptide receptor 2 (1047 aa).

A signal peptide spans 1-16; it reads MALPSLLLVVAALAGG. The Extracellular portion of the chain corresponds to 17 to 458; that stretch reads VRPPGARNLT…DKTPLSTLAI (442 aa). Asn24 and Asn35 each carry an N-linked (GlcNAc...) asparagine glycan. An intrachain disulfide couples Cys75 to Cys101. N-linked (GlcNAc...) asparagine glycosylation is found at Asn161, Asn195, Asn244, Asn277, and Asn349. Residues 459-478 form a helical membrane-spanning segment; it reads VALGTGITFIMFGVSSFLIF. Over 479-1047 the chain is Cytoplasmic; sequence RKLMLEKELA…GERKGPAGLL (569 aa). Residue Ser513 is modified to Phosphoserine. Positions 513-786 constitute a Protein kinase domain; the sequence is SRLTLSLRGS…PDFGQIKGFI (274 aa). At Thr516 the chain carries Phosphothreonine. Ser518, Ser522, Ser523, and Ser526 each carry phosphoserine. Thr529 carries the post-translational modification Phosphothreonine. The Guanylate cyclase domain maps to 861 to 991; the sequence is TIYFSDIVGF…DTVNTASRME (131 aa).

This sequence belongs to the adenylyl cyclase class-4/guanylyl cyclase family. Phosphorylated. Phosphorylation of the protein kinase-like domain is required for full activation by CNP. Post-translationally, glycosylated.

Its subcellular location is the cell membrane. It catalyses the reaction GTP = 3',5'-cyclic GMP + diphosphate. Its function is as follows. Receptor for the C-type natriuretic peptide NPPC/CNP hormone. Has guanylate cyclase activity upon binding of its ligand. May play a role in the regulation of skeletal growth. In Bos taurus (Bovine), this protein is Atrial natriuretic peptide receptor 2 (NPR2).